The sequence spans 114 residues: Large ribosomal subunit protein uL22 (114 aa).

Belongs to the universal ribosomal protein uL22 family. Part of the 50S ribosomal subunit.

Its function is as follows. This protein binds specifically to 23S rRNA; its binding is stimulated by other ribosomal proteins, e.g. L4, L17, and L20. It is important during the early stages of 50S assembly. It makes multiple contacts with different domains of the 23S rRNA in the assembled 50S subunit and ribosome. In terms of biological role, the globular domain of the protein is located near the polypeptide exit tunnel on the outside of the subunit, while an extended beta-hairpin is found that lines the wall of the exit tunnel in the center of the 70S ribosome. This Bacillus licheniformis (strain ATCC 14580 / DSM 13 / JCM 2505 / CCUG 7422 / NBRC 12200 / NCIMB 9375 / NCTC 10341 / NRRL NRS-1264 / Gibson 46) protein is Large ribosomal subunit protein uL22.